Reading from the N-terminus, the 314-residue chain is Protoheme IX farnesyltransferase 2 (314 aa).

Helical transmembrane passes span Val-32–Val-49, Leu-54–Trp-76, Ile-98–Leu-118, Val-120–Val-140, Ile-153–Gly-173, Ile-180–Phe-200, Ile-226–Thr-246, Phe-249–Leu-269, and Phe-285–Val-305.

The protein belongs to the UbiA prenyltransferase family. Protoheme IX farnesyltransferase subfamily.

The protein localises to the cell inner membrane. It catalyses the reaction heme b + (2E,6E)-farnesyl diphosphate + H2O = Fe(II)-heme o + diphosphate. Its pathway is porphyrin-containing compound metabolism; heme O biosynthesis; heme O from protoheme: step 1/1. In terms of biological role, converts heme B (protoheme IX) to heme O by substitution of the vinyl group on carbon 2 of heme B porphyrin ring with a hydroxyethyl farnesyl side group. This is Protoheme IX farnesyltransferase 2 from Mesorhizobium japonicum (strain LMG 29417 / CECT 9101 / MAFF 303099) (Mesorhizobium loti (strain MAFF 303099)).